We begin with the raw amino-acid sequence, 430 residues long: Type II methyltransferase M.Sau96I (430 aa).

The 55-residue stretch at 9-63 folds into the HTH cro/C1-type domain; it reads IEKMKNQNIKTQTELAEKIDISKSQLSFMFSDEYEPLKKNVIKLADVLKVSPNDI. In terms of domain architecture, SAM-dependent MTase C5-type spans 99-429; the sequence is YNVFETFAGA…KSLVHYLNQF (331 aa). Cys-174 is an active-site residue.

Belongs to the class I-like SAM-binding methyltransferase superfamily. C5-methyltransferase family.

It carries out the reaction a 2'-deoxycytidine in DNA + S-adenosyl-L-methionine = a 5-methyl-2'-deoxycytidine in DNA + S-adenosyl-L-homocysteine + H(+). In terms of biological role, a methylase that recognizes the double-stranded sequence 5'-GGNCC-3', methylates C-4 on both strands, and protects the DNA from cleavage by the Sau96I endonuclease. The sequence is that of Type II methyltransferase M.Sau96I from Staphylococcus aureus.